An 85-amino-acid chain; its full sequence is Putative membrane protein insertion efficiency factor (85 aa).

This sequence belongs to the UPF0161 family.

The protein localises to the cell membrane. Functionally, could be involved in insertion of integral membrane proteins into the membrane. This is Putative membrane protein insertion efficiency factor from Baumannia cicadellinicola subsp. Homalodisca coagulata.